The sequence spans 20 residues: Unknown protein NF007 from 2D-PAGE (20 aa).

This Naegleria fowleri (Brain eating amoeba) protein is Unknown protein NF007 from 2D-PAGE.